Consider the following 181-residue polypeptide: Adenine phosphoribosyltransferase (181 aa).

Belongs to the purine/pyrimidine phosphoribosyltransferase family. In terms of assembly, homodimer.

Its subcellular location is the cytoplasm. The catalysed reaction is AMP + diphosphate = 5-phospho-alpha-D-ribose 1-diphosphate + adenine. Its pathway is purine metabolism; AMP biosynthesis via salvage pathway; AMP from adenine: step 1/1. Catalyzes a salvage reaction resulting in the formation of AMP, that is energically less costly than de novo synthesis. The sequence is that of Adenine phosphoribosyltransferase from Brucella suis (strain ATCC 23445 / NCTC 10510).